The following is a 414-amino-acid chain: Glutamyl-tRNA reductase (414 aa).

Residues 49-52, serine 108, 113-115, and glutamine 119 each bind substrate; these read TCNR and EPQ. Catalysis depends on cysteine 50, which acts as the Nucleophile. 188 to 193 contacts NADP(+); the sequence is GAGQTG.

It belongs to the glutamyl-tRNA reductase family. In terms of assembly, homodimer.

It carries out the reaction (S)-4-amino-5-oxopentanoate + tRNA(Glu) + NADP(+) = L-glutamyl-tRNA(Glu) + NADPH + H(+). It participates in porphyrin-containing compound metabolism; protoporphyrin-IX biosynthesis; 5-aminolevulinate from L-glutamyl-tRNA(Glu): step 1/2. Catalyzes the NADPH-dependent reduction of glutamyl-tRNA(Glu) to glutamate 1-semialdehyde (GSA). The chain is Glutamyl-tRNA reductase from Francisella tularensis subsp. tularensis (strain WY96-3418).